We begin with the raw amino-acid sequence, 260 residues long: tRNA pseudouridine synthase C (260 aa).

Residue aspartate 54 is part of the active site.

It belongs to the pseudouridine synthase RluA family.

It carries out the reaction uridine(65) in tRNA = pseudouridine(65) in tRNA. Responsible for synthesis of pseudouridine from uracil-65 in transfer RNAs. This is tRNA pseudouridine synthase C (truC) from Escherichia coli (strain K12).